A 129-amino-acid chain; its full sequence is Iron-sulfur cluster assembly 1 homolog, mitochondrial (129 aa).

The N-terminal 12 residues, 1 to 12 (MSASLVRATVRA), are a transit peptide targeting the mitochondrion. Fe cation is bound by residues Cys57, Cys121, and Cys123.

It belongs to the HesB/IscA family. Interacts with CRY2, but not with CRY1 (in vitro).

Its subcellular location is the mitochondrion. In terms of biological role, involved in the maturation of mitochondrial 4Fe-4S proteins functioning late in the iron-sulfur cluster assembly pathway. Probably involved in the binding of an intermediate of Fe/S cluster assembly. In Bos taurus (Bovine), this protein is Iron-sulfur cluster assembly 1 homolog, mitochondrial (ISCA1).